Reading from the N-terminus, the 220-residue chain is Octanoyltransferase (220 aa).

The 182-residue stretch at 27 to 208 (PGTADEIWLC…QLARAHGHAV (182 aa)) folds into the BPL/LPL catalytic domain. Substrate-binding positions include 66–73 (RGGQVTYH), 139–141 (ALG), and 152–154 (GLA). The Acyl-thioester intermediate role is filled by C170.

Belongs to the LipB family.

The protein resides in the cytoplasm. The enzyme catalyses octanoyl-[ACP] + L-lysyl-[protein] = N(6)-octanoyl-L-lysyl-[protein] + holo-[ACP] + H(+). It participates in protein modification; protein lipoylation via endogenous pathway; protein N(6)-(lipoyl)lysine from octanoyl-[acyl-carrier-protein]: step 1/2. Its function is as follows. Catalyzes the transfer of endogenously produced octanoic acid from octanoyl-acyl-carrier-protein onto the lipoyl domains of lipoate-dependent enzymes. Lipoyl-ACP can also act as a substrate although octanoyl-ACP is likely to be the physiological substrate. The protein is Octanoyltransferase of Bordetella parapertussis (strain 12822 / ATCC BAA-587 / NCTC 13253).